The chain runs to 163 residues: RxLR effector protein PITG_13625 (163 aa).

The signal sequence occupies residues 1–23; it reads MKVSKAIVALAALCMALLAPAAG. Residues 37–52 carry the RxLR-dEER motif; sequence RHLRQESAELATTPEE.

This sequence belongs to the RxLR effector family.

The protein localises to the secreted. The protein resides in the host cell membrane. In terms of biological role, effector that enhances P.infestans colonization of Nicotiana benthamiana leaves. The polypeptide is RxLR effector protein PITG_13625 (Phytophthora infestans (strain T30-4) (Potato late blight agent)).